Here is a 261-residue protein sequence, read N- to C-terminus: tRNA(His) guanylyltransferase (261 aa).

The Mg(2+) site is built by Asp29, Gly30, and Asp76. GTP-binding positions include 29-34 (DGKGFH) and 75-76 (SD).

This sequence belongs to the tRNA(His) guanylyltransferase family. Mg(2+) serves as cofactor.

It carries out the reaction a 5'-end ribonucleotide-tRNA(His) + GTP + ATP + H2O = a 5'-end phospho-guanosine-ribonucleotide-tRNA(His) + AMP + 2 diphosphate + H(+). Its function is as follows. Adds a GMP to the 5'-end of tRNA(His) after transcription and RNase P cleavage. The chain is tRNA(His) guanylyltransferase (thg1) from Schizosaccharomyces pombe (strain 972 / ATCC 24843) (Fission yeast).